The chain runs to 348 residues: 4-hydroxy-2-oxovalerate aldolase 2 (348 aa).

One can recognise a Pyruvate carboxyltransferase domain in the interval 5-256 (LQICDSTLRD…EARIKLFDAL (252 aa)). 13-14 (RD) is a substrate binding site. Position 14 (aspartate 14) interacts with Mn(2+). The Proton acceptor role is filled by histidine 17. Residues serine 168 and histidine 195 each contribute to the substrate site. Positions 195 and 197 each coordinate Mn(2+).

The protein belongs to the 4-hydroxy-2-oxovalerate aldolase family.

It carries out the reaction (S)-4-hydroxy-2-oxopentanoate = acetaldehyde + pyruvate. The chain is 4-hydroxy-2-oxovalerate aldolase 2 from Salinispora arenicola (strain CNS-205).